Consider the following 75-residue polypeptide: Notewaprin-b (75 aa).

Positions 1 to 24 are cleaved as a signal peptide; the sequence is MSSGGLLLLLGLLTLWAELTPVSS. The region spanning 27–72 is the WAP domain; it reads RPKKPGLCPPRPQKPPCVRECKNDWICPGEQKCCRYGCIYECRDPI. 4 cysteine pairs are disulfide-bonded: Cys34–Cys60, Cys43–Cys64, Cys47–Cys59, and Cys53–Cys68.

Belongs to the venom waprin family. In terms of tissue distribution, expressed by the venom gland.

The protein resides in the secreted. In terms of biological role, damages membranes of susceptible bacteria. Has no hemolytic activity. Not toxic to mice. Does not inhibit the proteinases elastase and cathepsin G. This is Notewaprin-b from Notechis scutatus scutatus (Mainland tiger snake).